An 832-amino-acid polypeptide reads, in one-letter code: Dolichyl-phosphate-mannose--protein mannosyltransferase 6 (832 aa).

Residues 1-44 are disordered; that stretch reads MATGYSTGVSPFDLDENNHNDSIHHRHQNHHSQSHDSSGERDDT. Residues N20 and N59 are each glycosylated (N-linked (GlcNAc...) asparagine). 7 helical membrane passes run 135 to 155, 175 to 194, 206 to 227, 232 to 252, 266 to 286, 293 to 311, and 327 to 347; these read FYFDVHPPLGKLLIGLSGYLA, YVFMRIFNCFFGILVTPLAY, TCWLIAFMVIFEQLSLTLSKFI, MLLFFTVLTMYCLVKVHTLAI, LEIKWYILTGISIGCVCSVKW, ALVGFYTIVDLWIKFYQTF, and LIHWVVRIFTLIIIPMTIYVA. N357 carries an N-linked (GlcNAc...) asparagine glycan. Residues 383–437 enclose the MIR 1 domain; sequence PRSVAFGSLVTIRSQGLSPNLIHSHPHNYPQGSQEQQVTTYGFKDDNNEFLFEFG. A glycan (N-linked (GlcNAc...) asparagine) is linked at N453. 2 MIR domains span residues 466–522 and 537–595; these read HVII…IEIQ and PSEI…IEKH. Transmembrane regions (helical) follow at residues 676–696, 723–743, 755–775, and 787–807; these read ITWISTIALIVCPLYLLVVGI, LLAARALLPLAGWVLHYVPFI, VPALYFAIFVAGFIVDAILNL, and IFKVVIYSTLYLVICISFWYF.

It belongs to the glycosyltransferase 39 family.

Its subcellular location is the endoplasmic reticulum membrane. It catalyses the reaction a di-trans,poly-cis-dolichyl beta-D-mannosyl phosphate + L-seryl-[protein] = 3-O-(alpha-D-mannosyl)-L-seryl-[protein] + a di-trans,poly-cis-dolichyl phosphate + H(+). The catalysed reaction is a di-trans,poly-cis-dolichyl beta-D-mannosyl phosphate + L-threonyl-[protein] = 3-O-(alpha-D-mannosyl)-L-threonyl-[protein] + a di-trans,poly-cis-dolichyl phosphate + H(+). The protein operates within protein modification; protein glycosylation. Functionally, protein mannosyltransferase (PMT) involved in hyphal morphogenesis and drug sensitivity. Transfers mannose from Dol-P-mannose to Ser or Thr residues on proteins. PMT1, PMT2 and PMT4 account for most of the protein-O-glycosylation activity, while PMT5 and PMT6 may specifically modulate a much narrower spectrum of target proteins. Required for biofilm formation and virulence. The chain is Dolichyl-phosphate-mannose--protein mannosyltransferase 6 (PMT6) from Candida albicans (strain SC5314 / ATCC MYA-2876) (Yeast).